We begin with the raw amino-acid sequence, 369 residues long: UDP-N-acetylglucosamine--N-acetylmuramyl-(pentapeptide) pyrophosphoryl-undecaprenol N-acetylglucosamine transferase (369 aa).

UDP-N-acetyl-alpha-D-glucosamine-binding positions include 10-12, asparagine 124, arginine 166, serine 196, isoleucine 251, and glutamine 296; that span reads TAG.

The protein belongs to the glycosyltransferase 28 family. MurG subfamily.

It is found in the cell membrane. The catalysed reaction is di-trans,octa-cis-undecaprenyl diphospho-N-acetyl-alpha-D-muramoyl-L-alanyl-D-glutamyl-meso-2,6-diaminopimeloyl-D-alanyl-D-alanine + UDP-N-acetyl-alpha-D-glucosamine = di-trans,octa-cis-undecaprenyl diphospho-[N-acetyl-alpha-D-glucosaminyl-(1-&gt;4)]-N-acetyl-alpha-D-muramoyl-L-alanyl-D-glutamyl-meso-2,6-diaminopimeloyl-D-alanyl-D-alanine + UDP + H(+). It participates in cell wall biogenesis; peptidoglycan biosynthesis. Functionally, cell wall formation. Catalyzes the transfer of a GlcNAc subunit on undecaprenyl-pyrophosphoryl-MurNAc-pentapeptide (lipid intermediate I) to form undecaprenyl-pyrophosphoryl-MurNAc-(pentapeptide)GlcNAc (lipid intermediate II). In Acetivibrio thermocellus (strain ATCC 27405 / DSM 1237 / JCM 9322 / NBRC 103400 / NCIMB 10682 / NRRL B-4536 / VPI 7372) (Clostridium thermocellum), this protein is UDP-N-acetylglucosamine--N-acetylmuramyl-(pentapeptide) pyrophosphoryl-undecaprenol N-acetylglucosamine transferase.